The primary structure comprises 454 residues: Notoamide biosynthesis cluster protein M' (454 aa).

N-linked (GlcNAc...) asparagine glycans are attached at residues asparagine 51 and asparagine 74. Residues 205 to 219 (KARSKEKKPKRKKSK) show a composition bias toward basic residues. A disordered region spans residues 205 to 224 (KARSKEKKPKRKKSKAEKEH). 2 helical membrane-spanning segments follow: residues 334–354 (MTTV…SGLF) and 375–395 (FWMY…VWGV).

The protein resides in the membrane. Its function is as follows. Part of the gene cluster that mediates the biosynthesis of notoamide, a fungal indole alkaloid that belongs to a family of natural products containing a characteristic bicyclo[2.2.2]diazaoctane core. The first step of notoamide biosynthesis involves coupling of L-proline and L-tryptophan by the bimodular NRPS notE', to produce cyclo-L-tryptophan-L-proline called brevianamide F. The reverse prenyltransferase notF' then acts as a deoxybrevianamide E synthase and converts brevianamide F to deoxybrevianamide E via reverse prenylation at C-2 of the indole ring leading to the bicyclo[2.2.2]diazaoctane core. Deoxybrevianamide E is further hydroxylated at C-6 of the indole ring, likely catalyzed by the cytochrome P450 monooxygenase notG', to yield 6-hydroxy-deoxybrevianamide E. 6-hydroxy-deoxybrevianamide E is a specific substrate of the prenyltransferase notC' for normal prenylation at C-7 to produce 6-hydroxy-7-prenyl-deoxybrevianamide, also called notoamide S. As the proposed pivotal branching point in notoamide biosynthesis, notoamide S can be diverted to notoamide E through an oxidative pyran ring closure putatively catalyzed by either notH' cytochrome P450 monooxygenase or the notD' FAD-linked oxidoreductase. This step would be followed by an indole 2,3-epoxidation-initiated pinacol-like rearrangement catalyzed by the notB' FAD-dependent monooxygenase leading to the formation of notoamide C and notoamide D. On the other hand notoamide S is converted to notoamide T by notH' (or notD'), a bifunctional oxidase that also functions as the intramolecular Diels-Alderase responsible for generation of (-)-notoamide T. To generate antipodal (+)-notoaminide T, notH (or notD) in Aspergillus strain MF297-2 is expected to catalyze a Diels-Alder reaction leading to the opposite stereochemistry. The remaining oxidoreductase notD' (or notH') likely catalyzes the oxidative pyran ring formation to yield (-)-stephacidin A. The FAD-dependent monooxygenase notI' is highly similar to notB' and is predicted to catalyze a similar conversion from (-)-stephacidin A to (+)-notoamide B via the 2,3-epoxidation of (-)-stephacidin A followed by a pinacol-type rearrangement. Finally, it remains unclear which enzyme could be responsible for the final hydroxylation steps leading to notoamide A and sclerotiamide. The function of notM' in the notoamide biosynthesis has not been determined yet. In Aspergillus versicolor, this protein is Notoamide biosynthesis cluster protein M'.